The primary structure comprises 297 residues: Mycothiol acetyltransferase (297 aa).

2 consecutive N-acetyltransferase domains span residues 8 to 153 and 156 to 297; these read DALD…PPLP and VALR…QYAL. E36 lines the 1D-myo-inositol 2-(L-cysteinylamino)-2-deoxy-alpha-D-glucopyranoside pocket. 80–82 lines the acetyl-CoA pocket; it reads LAV. Positions 183, 223, and 231 each coordinate 1D-myo-inositol 2-(L-cysteinylamino)-2-deoxy-alpha-D-glucopyranoside. Acetyl-CoA is bound by residues 235-237 and 242-248; these read VGV and QGGGLGK. Y269 is a 1D-myo-inositol 2-(L-cysteinylamino)-2-deoxy-alpha-D-glucopyranoside binding site. 274 to 279 contacts acetyl-CoA; it reads NSPAVR.

Belongs to the acetyltransferase family. MshD subfamily. In terms of assembly, monomer.

It catalyses the reaction 1D-myo-inositol 2-(L-cysteinylamino)-2-deoxy-alpha-D-glucopyranoside + acetyl-CoA = mycothiol + CoA + H(+). Functionally, catalyzes the transfer of acetyl from acetyl-CoA to desacetylmycothiol (Cys-GlcN-Ins) to form mycothiol. This is Mycothiol acetyltransferase from Actinosynnema mirum (strain ATCC 29888 / DSM 43827 / JCM 3225 / NBRC 14064 / NCIMB 13271 / NRRL B-12336 / IMRU 3971 / 101).